Reading from the N-terminus, the 244-residue chain is Octanoyltransferase (244 aa).

A disordered region spans residues 1–21 (MDKKLHSVSPESGPNSNLDLT). Polar residues predominate over residues 9 to 21 (SPESGPNSNLDLT). A BPL/LPL catalytic domain is found at 59-244 (PFSPQAVWLL…LNWEKINQSL (186 aa)). Residues 101–108 (RGGEVTHH), 168–170 (SIG), and 181–183 (GFS) each bind substrate. The Acyl-thioester intermediate role is filled by Cys199.

Belongs to the LipB family.

The protein localises to the cytoplasm. It carries out the reaction octanoyl-[ACP] + L-lysyl-[protein] = N(6)-octanoyl-L-lysyl-[protein] + holo-[ACP] + H(+). The protein operates within protein modification; protein lipoylation via endogenous pathway; protein N(6)-(lipoyl)lysine from octanoyl-[acyl-carrier-protein]: step 1/2. Functionally, catalyzes the transfer of endogenously produced octanoic acid from octanoyl-acyl-carrier-protein onto the lipoyl domains of lipoate-dependent enzymes. Lipoyl-ACP can also act as a substrate although octanoyl-ACP is likely to be the physiological substrate. This Prochlorococcus marinus (strain NATL1A) protein is Octanoyltransferase.